Reading from the N-terminus, the 235-residue chain is MTKQLNVDPAEISKFEDMASRWWDLEGEFKPLHQINPLRLNYVTDHAGGLFGKKILDVGCGGGILAESMAIEGADVTGLDMGKEPLTVARLHALETGAKLDYVLRTAEEQAELHPETYDIVTCMEMLEHVPNPASVIAACAKMVKPNGHVFFSTLNRNAKSYLFAIVGAEQLLKLVPKGTHDHKKFIRPSELIAMIDQTPLQDRHITGLHYNPLTDNYWLGKSVEVNYIVHTVKL.

Arg39, Gly59, Asp80, and Met124 together coordinate S-adenosyl-L-methionine.

Belongs to the methyltransferase superfamily. UbiG/COQ3 family.

The enzyme catalyses a 3-demethylubiquinol + S-adenosyl-L-methionine = a ubiquinol + S-adenosyl-L-homocysteine + H(+). The catalysed reaction is a 3-(all-trans-polyprenyl)benzene-1,2-diol + S-adenosyl-L-methionine = a 2-methoxy-6-(all-trans-polyprenyl)phenol + S-adenosyl-L-homocysteine + H(+). It functions in the pathway cofactor biosynthesis; ubiquinone biosynthesis. In terms of biological role, O-methyltransferase that catalyzes the 2 O-methylation steps in the ubiquinone biosynthetic pathway. The sequence is that of Ubiquinone biosynthesis O-methyltransferase from Photobacterium profundum (strain SS9).